A 352-amino-acid polypeptide reads, in one-letter code: Lipase chaperone (352 aa).

A helical membrane pass occupies residues 7-28; it reads LSLVAVVVAGGLTLYWRWPAAV.

Belongs to the lipase chaperone family.

It is found in the cell inner membrane. May be involved in the folding of the extracellular lipase during its passage through the periplasm. This Pseudomonas wisconsinensis protein is Lipase chaperone (lifO).